Consider the following 136-residue polypeptide: Glutaredoxin-C7 (136 aa).

The Glutaredoxin domain occupies 29-135; it reads LLRIESLASE…PLLKDAGALW (107 aa). C49 and C52 form a disulfide bridge. The short motif at 133–136 is the Responsive for interaction with TGA factors element; that stretch reads ALWL.

It belongs to the glutaredoxin family. CC-type subfamily. Interacts with TGA2, TGA3, TGA7 and PAN. Interacts with TGA9 and TGA10 in the nucleus. Highly expressed in inflorescences, roots, and siliques. Expressed at lower levels in mature flowers.

The protein resides in the cytoplasm. The protein localises to the nucleus. Its function is as follows. Has a glutathione-disulfide oxidoreductase activity in the presence of NADPH and glutathione reductase. Reduces low molecular weight disulfides and proteins. Involved in flower development as a regulator of petal primorida initiation and further petal morphogenesis. May mediate post-translational modifications of target proteins required for normal petal organ initiation and morphogenesis. ROXY1/TGA protein interactions can occur in vivo and support their biological relevance in petal development. May be involved in the regulation of the floral regulator class C gene AG (AGAMOUS). The polypeptide is Glutaredoxin-C7 (GRXC7) (Arabidopsis thaliana (Mouse-ear cress)).